Here is an 833-residue protein sequence, read N- to C-terminus: MLGAIARKTVENRILVSRHLISSTSCLFKDNNEELLESIKERIARNRRILQKHSSSHLKAREVNASISNLRQSMAAVQKKQKAAHEPPANSIVNIPSQVSIEVLGNGTGLLRACFILRTPLKTYMFNCPENACRFLWQLRIRSSSVVDLFITSANWDNIAGISSILLSKESNALSTRLHGAMNIKHFLECIRPFQDSDYGSCKYPSQVEERPYTMENYEDAGLKVTYIPLSPPLNIGSNNEKSKNVKVNNVDIAFLIEMKEAARRIDTMKLMELKVPKGPLIGKLKSGEAVTLPDGRTIQPDQVFSSDKVEGDKPLLLVTECTTEDHVKALIDSSSLQPFLNGEKQLDYMVHISDDAVINTPTYRHLMEKLNNPSITHLLINGGNPVIPAVESVYKHTRLLRSIAPSLFPALHPIDWSGIITQNEELSQRQDQFIRVAPMQRYWMRRGASFNEEPIVNNLLAAEPELSDKAKELIKEYQKLEKENKMDCEFPKLTFFGTSSAVPSKYRNVTGYLVEASENSAILIDVGEGTYGQMRAVFGEDGCKQLLVNLNCVLITHAHQDHMNGLYTIIARRKEAFESLGAPYRPLVLVCNRNVLKPMKTYSICFENIEHLLEIVDISRYPLTPPGSPGGPPGKRPRLPSPHLPPSRDVLQDMSSSFDKKAWKLDELKAVQVHHTRMANGFVMRVAGKRIVFSGDTKPCDLLVEEGKDADVLVHESTFEDGHEADAMRKRHSTMGQAVDVGKRMNAKHIILTHFSARYPKVPVLPEYLDKENIGVAMDMLRVRFDHLPLVSKLLPIFREVFVAELFELTIKKEQRVLKDKELSEKRGQLKA.

Residues 1–19 (MLGAIARKTVENRILVSRH) constitute a mitochondrion transit peptide. The span at 624–646 (LTPPGSPGGPPGKRPRLPSPHLP) shows a compositional bias: pro residues. A disordered region spans residues 624–652 (LTPPGSPGGPPGKRPRLPSPHLPPSRDVL).

Belongs to the RNase Z family. Homodimer. It depends on Zn(2+) as a cofactor. As to expression, highly expressed in the germline.

It localises to the mitochondrion. It is found in the nucleus. The catalysed reaction is Endonucleolytic cleavage of RNA, removing extra 3' nucleotides from tRNA precursor, generating 3' termini of tRNAs. A 3'-hydroxy group is left at the tRNA terminus and a 5'-phosphoryl group is left at the trailer molecule.. Its function is as follows. Zinc phosphodiesterase, which displays some tRNA 3'-processing endonuclease activity. Probably involved in tRNA maturation, by removing a 3'-trailer from precursor tRNA. Involved in germline proliferation. May be required for both mitosis and meiosis in germ cells. Functionally, does not regulate the mitochondrial unfolded protein response following mitochondrial stress. In terms of biological role, plays a role in mitochondrial unfolded protein response. Upon mitochondrial stress is exported from the nucleus where its tRNA endonuclease activity is negatively regulated. In response to mitochondrial stress, might be involved in activating a transcriptional response in an ATFS-1- and DVE-1-dependent manner. May play a role in negatively regulating the mitochondrial membrane potential. The chain is Zinc phosphodiesterase ELAC protein 2 homolog from Caenorhabditis elegans.